Consider the following 115-residue polypeptide: Large ribosomal subunit protein bL19 (115 aa).

It belongs to the bacterial ribosomal protein bL19 family.

In terms of biological role, this protein is located at the 30S-50S ribosomal subunit interface and may play a role in the structure and function of the aminoacyl-tRNA binding site. This chain is Large ribosomal subunit protein bL19, found in Akkermansia muciniphila (strain ATCC BAA-835 / DSM 22959 / JCM 33894 / BCRC 81048 / CCUG 64013 / CIP 107961 / Muc).